Reading from the N-terminus, the 166-residue chain is UPF0336 protein Mb0656 (166 aa).

Belongs to the UPF0336 family.

This Mycobacterium bovis (strain ATCC BAA-935 / AF2122/97) protein is UPF0336 protein Mb0656.